Here is a 293-residue protein sequence, read N- to C-terminus: Formamidopyrimidine-DNA glycosylase (293 aa).

Residue proline 2 is the Schiff-base intermediate with DNA of the active site. The active-site Proton donor is glutamate 3. Residue lysine 58 is the Proton donor; for beta-elimination activity of the active site. DNA contacts are provided by histidine 104, arginine 123, and lysine 166. The FPG-type zinc-finger motif lies at 257–293 (AVYDRESEPCRTKGCGGVVKRFVQNGRSTFCCPKCQK). Arginine 283 (proton donor; for delta-elimination activity) is an active-site residue.

The protein belongs to the FPG family. In terms of assembly, monomer. Zn(2+) is required as a cofactor.

It carries out the reaction Hydrolysis of DNA containing ring-opened 7-methylguanine residues, releasing 2,6-diamino-4-hydroxy-5-(N-methyl)formamidopyrimidine.. The catalysed reaction is 2'-deoxyribonucleotide-(2'-deoxyribose 5'-phosphate)-2'-deoxyribonucleotide-DNA = a 3'-end 2'-deoxyribonucleotide-(2,3-dehydro-2,3-deoxyribose 5'-phosphate)-DNA + a 5'-end 5'-phospho-2'-deoxyribonucleoside-DNA + H(+). Involved in base excision repair of DNA damaged by oxidation or by mutagenic agents. Acts as a DNA glycosylase that recognizes and removes damaged bases. Has a preference for oxidized purines, such as 7,8-dihydro-8-oxoguanine (8-oxoG). Has AP (apurinic/apyrimidinic) lyase activity and introduces nicks in the DNA strand. Cleaves the DNA backbone by beta-delta elimination to generate a single-strand break at the site of the removed base with both 3'- and 5'-phosphates. This Rhodopseudomonas palustris (strain BisA53) protein is Formamidopyrimidine-DNA glycosylase.